The sequence spans 155 residues: 3-hydroxyacyl-[acyl-carrier-protein] dehydratase FabZ (155 aa).

Residue His-58 is part of the active site.

The protein belongs to the thioester dehydratase family. FabZ subfamily.

The protein resides in the cytoplasm. It catalyses the reaction a (3R)-hydroxyacyl-[ACP] = a (2E)-enoyl-[ACP] + H2O. Involved in unsaturated fatty acids biosynthesis. Catalyzes the dehydration of short chain beta-hydroxyacyl-ACPs and long chain saturated and unsaturated beta-hydroxyacyl-ACPs. This is 3-hydroxyacyl-[acyl-carrier-protein] dehydratase FabZ from Rhizobium leguminosarum bv. trifolii (strain WSM2304).